The primary structure comprises 330 residues: Aspartate--ammonia ligase (330 aa).

This sequence belongs to the class-II aminoacyl-tRNA synthetase family. AsnA subfamily.

Its subcellular location is the cytoplasm. It carries out the reaction L-aspartate + NH4(+) + ATP = L-asparagine + AMP + diphosphate + H(+). It participates in amino-acid biosynthesis; L-asparagine biosynthesis; L-asparagine from L-aspartate (ammonia route): step 1/1. The sequence is that of Aspartate--ammonia ligase from Shigella dysenteriae serotype 1 (strain Sd197).